Here is a 206-residue protein sequence, read N- to C-terminus: Large ribosomal subunit protein uL4 (206 aa).

Residues 48-97 (THAVKNRSLVSGGGKKPWKQKHTGRARQGSTRASQWVGGGKAMGPKPRDY) are disordered. Basic residues predominate over residues 63–72 (KPWKQKHTGR).

Belongs to the universal ribosomal protein uL4 family. As to quaternary structure, part of the 50S ribosomal subunit.

One of the primary rRNA binding proteins, this protein initially binds near the 5'-end of the 23S rRNA. It is important during the early stages of 50S assembly. It makes multiple contacts with different domains of the 23S rRNA in the assembled 50S subunit and ribosome. Functionally, forms part of the polypeptide exit tunnel. The chain is Large ribosomal subunit protein uL4 from Anaeromyxobacter dehalogenans (strain 2CP-C).